The primary structure comprises 349 residues: NADP-dependent alcohol dehydrogenase C 1 (349 aa).

Zn(2+) is bound by residues Cys-41, His-63, Cys-94, Cys-97, Cys-100, Cys-108, and Cys-159. Lys-210 participates in a covalent cross-link: Isoglutamyl lysine isopeptide (Lys-Gln) (interchain with Q-Cter in protein Pup).

It belongs to the zinc-containing alcohol dehydrogenase family. The cofactor is Zn(2+).

The catalysed reaction is a primary alcohol + NADP(+) = an aldehyde + NADPH + H(+). Functionally, prefers aldehydes over alcohols. The polypeptide is NADP-dependent alcohol dehydrogenase C 1 (adhc1) (Mycolicibacterium smegmatis (strain ATCC 700084 / mc(2)155) (Mycobacterium smegmatis)).